A 210-amino-acid chain; its full sequence is Large ribosomal subunit protein mL57 (210 aa).

Residues 1-59 (MLTRHCNRLGLQIENKFVFRSSSWNCVRRIGKIACNENKYRYEMTSTEEDIDSFFSRVF) constitute a mitochondrion transit peptide.

This sequence belongs to the ribonuclease III family. Mitochondrion-specific ribosomal protein mL57 subfamily. As to quaternary structure, component of the mitochondrial large ribosomal subunit (mt-LSU). Mature yeast 74S mitochondrial ribosomes consist of a small (37S) and a large (54S) subunit. The 37S small subunit contains a 15S ribosomal RNA (15S mt-rRNA) and at least 32 different proteins. The 54S large subunit contains a 21S rRNA (21S mt-rRNA) and at least 45 different proteins. mL57 forms a heterodimer with mL44 and stabilizes rRNA expansion segments 1/2 at a membrane-facing protuberance close to the point of attachment of the ribosome to the translocon in the membrane.

The protein localises to the mitochondrion. Component of the mitochondrial ribosome (mitoribosome), a dedicated translation machinery responsible for the synthesis of mitochondrial genome-encoded proteins, including at least some of the essential transmembrane subunits of the mitochondrial respiratory chain. The mitoribosomes are attached to the mitochondrial inner membrane and translation products are cotranslationally integrated into the membrane. This chain is Large ribosomal subunit protein mL57 (mrp15), found in Schizosaccharomyces pombe (strain 972 / ATCC 24843) (Fission yeast).